The following is a 276-amino-acid chain: MKLCDFEVGLDQPLFLIAGPCVIESMQLQLDVAGKLKEITGKLGVNFIFKSSFDKANRTSGTSFRGPGLEEGLKVLDAVKKQIGVPVLTDVHEYTPMNEVAAVVDVLQTPAFLVRQTDFIKNVCAAGKPVNIKKGQFLAPWDMKPVVDKAKSTGNEQIMVCERGASFGYNNLVSDMRSLSVMRDTGCPVVFDATHSVQLPGGQGSSSGGQREFVPVLARAAVAVGISGLFAETHPDPSKALSDGPNAWPLDRMEELLETLMELDTVTKKHGFARFA.

The protein belongs to the KdsA family.

The protein localises to the cytoplasm. The catalysed reaction is D-arabinose 5-phosphate + phosphoenolpyruvate + H2O = 3-deoxy-alpha-D-manno-2-octulosonate-8-phosphate + phosphate. It participates in carbohydrate biosynthesis; 3-deoxy-D-manno-octulosonate biosynthesis; 3-deoxy-D-manno-octulosonate from D-ribulose 5-phosphate: step 2/3. Its pathway is bacterial outer membrane biogenesis; lipopolysaccharide biosynthesis. The protein is 2-dehydro-3-deoxyphosphooctonate aldolase of Xanthomonas axonopodis pv. citri (strain 306).